The following is a 122-amino-acid chain: MMVDPLYKGGLTKPLCSSGLRPITDSCVVIPNFDNSVRSIIVVNILVFAGILYSQFRNTLSIFSLWCPNTRAVFLFICPCLLYFYQGIFSTDEQIGTFNIIWMLRRLTIELIIRNLNAEKER.

Helical transmembrane passes span 36–56 (SVRSIIVVNILVFAGILYSQF) and 72–92 (AVFLFICPCLLYFYQGIFSTD).

It is found in the membrane. This is an uncharacterized protein from Saccharomyces cerevisiae (strain ATCC 204508 / S288c) (Baker's yeast).